The following is a 457-amino-acid chain: Cystathionine beta-lyase, chloroplastic (457 aa).

A chloroplast-targeting transit peptide spans 1–51 (MFSRPFVTPVTIDLQVKSITAGNMWEGLGFYKPANSKSNQMICSKGFRLNC). Residues Y120, R122, G150, M151, S268, and T270 each contribute to the pyridoxal 5'-phosphate site. K271 is subject to N6-(pyridoxal phosphate)lysine.

It belongs to the trans-sulfuration enzymes family. As to quaternary structure, forms homodimers. May form homotetramers from two homodimers. It depends on pyridoxal 5'-phosphate as a cofactor.

The protein resides in the plastid. Its subcellular location is the chloroplast. The catalysed reaction is L,L-cystathionine + H2O = L-homocysteine + pyruvate + NH4(+). It catalyses the reaction an S-substituted L-cysteine + H2O = a thiol + pyruvate + NH4(+). Catalyzes the degradation of cystathionine. The polypeptide is Cystathionine beta-lyase, chloroplastic (Mimosa pudica (Sensitive plant)).